A 367-amino-acid chain; its full sequence is 2,6-dihydropseudooxynicotine hydrolase (367 aa).

Active-site residues include Glu148, Ser217, Asp300, and His329.

This sequence belongs to the AB hydrolase superfamily. Homodimer.

It catalyses the reaction 2,6-dihydroxypseudooxynicotine + H2O = 2,6-dihydroxypyridine + 4-(methylamino)butanoate + H(+). It participates in alkaloid degradation; nicotine degradation; 2,6-dihydroxypyridine and 4-(methylamino)butanoate from 6-hydroxypseudooxynicotine: step 2/2. L-nicotine is used as a growth substrate. Plays a role in nicotine catabolism by cleaving a C-C bond in 2,6-dihydroxypseudooxynicotine. This Paenarthrobacter nicotinovorans (Arthrobacter nicotinovorans) protein is 2,6-dihydropseudooxynicotine hydrolase.